We begin with the raw amino-acid sequence, 598 residues long: DNA (cytosine-5)-methyltransferase DRM2 (598 aa).

2 disordered regions span residues 1–49 and 114–146; these read MVDW…NGKA and EVDE…GDED. A UBA 1 domain is found at 42-91; the sequence is PQDANGKANGSGALVAEFMGMGFPKEMILKAIKEIGDTDTEQLLELLLTY. Acidic residues predominate over residues 114–128; the sequence is EVDEEEDDTNWDEYD. Residues 150 to 194 form the UBA 2 domain; that stretch reads EMSEKDEKMKSLVNMGFPEDEAKMAIDRCGLDAPVAVLVDSIYAS. Residues 227-252 form a disordered region; sequence GSKKRKRYGSGPSGNQVPFDGSHEEP. An SAM-dependent MTase DRM-type domain is found at 272–598; it reads VHRNLPDQAL…EHVKATMSAV (327 aa).

Belongs to the class I-like SAM-binding methyltransferase superfamily. DRM-methyltransferase family. In terms of assembly, interacts (via UBA domains) with EIF4A.

Its subcellular location is the nucleus. The catalysed reaction is a 2'-deoxycytidine in DNA + S-adenosyl-L-methionine = a 5-methyl-2'-deoxycytidine in DNA + S-adenosyl-L-homocysteine + H(+). Its function is as follows. Involved in de novo DNA methylation. Required for CpG and non-CpG methylation. Required for normal establishment and maintenance of RNA-directed DNA methylation (RdDM) mediated by small interfering RNAs (siRNAs). Regulates proper plant development in both vegetative and reproductive stages through DNA methylation. In Oryza sativa subsp. japonica (Rice), this protein is DNA (cytosine-5)-methyltransferase DRM2.